We begin with the raw amino-acid sequence, 334 residues long: Glycerol-3-phosphate dehydrogenase [NAD(P)+] (334 aa).

Positions 13, 33, and 106 each coordinate NADPH. Sn-glycerol 3-phosphate is bound by residues lysine 106, glycine 137, and serine 139. Alanine 141 contributes to the NADPH binding site. Sn-glycerol 3-phosphate is bound by residues lysine 192, aspartate 245, serine 255, arginine 256, and asparagine 257. Catalysis depends on lysine 192, which acts as the Proton acceptor. NADPH is bound at residue arginine 256. Residues valine 280 and glutamate 282 each coordinate NADPH.

The protein belongs to the NAD-dependent glycerol-3-phosphate dehydrogenase family.

Its subcellular location is the cytoplasm. It catalyses the reaction sn-glycerol 3-phosphate + NAD(+) = dihydroxyacetone phosphate + NADH + H(+). The catalysed reaction is sn-glycerol 3-phosphate + NADP(+) = dihydroxyacetone phosphate + NADPH + H(+). The protein operates within membrane lipid metabolism; glycerophospholipid metabolism. Its function is as follows. Catalyzes the reduction of the glycolytic intermediate dihydroxyacetone phosphate (DHAP) to sn-glycerol 3-phosphate (G3P), the key precursor for phospholipid synthesis. The polypeptide is Glycerol-3-phosphate dehydrogenase [NAD(P)+] (Chlamydia abortus (strain DSM 27085 / S26/3) (Chlamydophila abortus)).